We begin with the raw amino-acid sequence, 82 residues long: RNA-binding protein BPUM_0095 (82 aa).

It belongs to the eukaryotic ribosomal protein eL8 family.

The protein is RNA-binding protein BPUM_0095 of Bacillus pumilus (strain SAFR-032).